A 492-amino-acid chain; its full sequence is MDAEALRNLYLSSILPNESKTGNESPEKKFSSPVLLQRAKVIPLRLEYEERKLLHLLTAALDVSDYTDSVDTLSFSSPAKRLAQQLKGITAVLSGIMVAYDYKVGQELLEHKNFEQHAEFFKKIFEIGRRYKVLNPNRLGSTYGKLMYFVQDSMRPEIQDALGFNLFKPILTVYEFLNERDALNALEDPYAEIATMEIVAENRSRSAIQKDIKAKERAVEHIAKKYYSSKITKEKVRWCLYSIADSNSYLRYNRDPIAKLIGLVEAYFSPDTVDDEFTLAIDAINGSRLKHSHYKQYHYVVQSLHLWLLIMGEIFSLWALSDLELTNPDMEYKLIDNNQGIHRMQPCPNIRIAMERILRTAQEQSETWIGSSTIHLGDTAVPNALLFIDKYMQVPRILTPLVLLFKELDSLNDHSLLNYIDTAFGGREYLKKTILTDFMRFGFDGSGADNWFDAGSCIDGRLTSAWNWANNIHTKDYYRVLLMSGFLSFNGE.

It belongs to the UPF0652 family.

The protein localises to the cytoplasm. The protein resides in the nucleus. The chain is UPF0652 protein C22H10.08 from Schizosaccharomyces pombe (strain 972 / ATCC 24843) (Fission yeast).